A 109-amino-acid polypeptide reads, in one-letter code: Class I hydrophobin 2 (109 aa).

The signal sequence occupies residues 1–18 (MQFKLAFVSIALATLAVA). Intrachain disulfides connect Cys-30-Cys-90, Cys-37-Cys-84, Cys-38-Cys-71, and Cys-91-Cys-104.

The protein belongs to the fungal hydrophobin family. In terms of assembly, self-assembles to form functional amyloid fibrils called rodlets. Self-assembly into fibrillar rodlets occurs spontaneously at hydrophobic:hydrophilic interfaces and the rodlets further associate laterally to form amphipathic monolayers.

The protein resides in the secreted. It is found in the cell wall. Aerial growth, conidiation, and dispersal of filamentous fungi in the environment rely upon a capability of their secreting small amphipathic proteins called hydrophobins (HPBs) with low sequence identity. Class I can self-assemble into an outermost layer of rodlet bundles on aerial cell surfaces, conferring cellular hydrophobicity that supports fungal growth, development and dispersal; whereas Class II form highly ordered films at water-air interfaces through intermolecular interactions but contribute nothing to the rodlet structure. Hyd2 is a class I hydrophobin that may allow the dikaryotic mycelia to attach to the hydrophobic surface of the substrate. Higher expression in dikaryotic mycelia than in monokaryotic mycelia indicates that dikaryons require more hyd2 hydrophobin than the monokaryons, presumably for a higher rate of hyphal growth. The sequence is that of Class I hydrophobin 2 from Lentinula edodes (Shiitake mushroom).